The primary structure comprises 297 residues: 5'-3' exonuclease (297 aa).

Positions 171-262 (EPDQIVDFKA…MKLEKELFAI (92 aa)) constitute a 5'-3' exonuclease domain.

Its function is as follows. 5'-3' exonuclease acting preferentially on double-stranded DNA. The polypeptide is 5'-3' exonuclease (polA) (Mycoplasmopsis pulmonis (strain UAB CTIP) (Mycoplasma pulmonis)).